The chain runs to 458 residues: Ammonium transporter Rh type B (458 aa).

The Cytoplasmic segment spans residues 1–13 (MAGSPSRAAGRRL). A helical membrane pass occupies residues 14–34 (QLPLLCLFLQGATAVLFAVFV). Residues 35 to 61 (RYNHKTDAALWHRSNHSNADNEFYFRY) are Extracellular-facing. N-linked (GlcNAc...) asparagine glycosylation occurs at Asn-49. Residues 62-82 (PSFQDVHAMVFVGFGFLMVFL) traverse the membrane as a helical segment. The Cytoplasmic portion of the chain corresponds to 83-86 (QRYG). Residues 87–107 (FSSVGFTFLLAAFALQWSTLV) form a helical membrane-spanning segment. Residues 108 to 124 (QGFLHSFHGGHIHVGVE) lie on the Extracellular side of the membrane. A helical membrane pass occupies residues 125–145 (SMINADFCAGAVLISFGAVLG). Topologically, residues 146–149 (KTGP) are cytoplasmic. Residues 150 to 170 (AQLLLMALLEVVLFGINEFVL) form a helical membrane-spanning segment. Topologically, residues 171-178 (LHLLGVRD) are extracellular. The chain crosses the membrane as a helical span at residues 179–201 (AGGSMTIHTFGAYFGLVLSRVLY). Residues 202 to 219 (RPQLEKSKHRQGSVYHSD) lie on the Cytoplasmic side of the membrane. Residues 220-240 (LFTMIGTIFLWIFWPSFNAAL) traverse the membrane as a helical segment. At 241–251 (TALGAGQHRTA) the chain is on the extracellular side. A helical transmembrane segment spans residues 252 to 272 (LNTYYSLAASTLGTFALSALV). Residues 273–282 (GEDGRLDMVH) are Cytoplasmic-facing. A helical transmembrane segment spans residues 283–303 (IQNAALTGGVVVGTSSKMMLT). A topological domain (extracellular) is located at residue Pro-304. A helical membrane pass occupies residues 305–325 (FGALAAGFLAGTVSTLGYKFF). Over 326–346 (TPILESKFKVQDTCGVHNLHG) the chain is Cytoplasmic. A helical membrane pass occupies residues 347 to 367 (MPGVLGALLGVLVAGLATHEA). Topologically, residues 368-393 (YGDGLESVFPLIAEGQRSATSQAMHQ) are extracellular. Residues 394 to 414 (LFGLFVTLMFASVGGGLGGLL) form a helical membrane-spanning segment. Residues 415–458 (LKLPFLDSPPDSQCYEDQVHWQVPGEHEDKAQRPLRVEEADTYA) are Cytoplasmic-facing. The tract at residues 416–424 (KLPFLDSPP) is interaction with ANK3. Residues 429 to 432 (YEDQ) carry the Basolateral sorting signal motif. Residues 439–458 (GEHEDKAQRPLRVEEADTYA) are disordered.

Belongs to the ammonium transporter (TC 2.A.49) family. Rh subfamily. Interacts (via C-terminus) with ANK2 and ANK3; required for targeting to the basolateral membrane. Post-translationally, N-glycosylated.

Its subcellular location is the cell membrane. It is found in the basolateral cell membrane. The enzyme catalyses NH4(+)(in) = NH4(+)(out). It carries out the reaction methylamine(out) = methylamine(in). It catalyses the reaction CO2(out) = CO2(in). Ammonium transporter involved in the maintenance of acid-base homeostasis. Transports ammonium and its related derivative methylammonium across the basolateral plasma membrane of epithelial cells likely contributing to renal transepithelial ammonia transport and ammonia metabolism. May transport either NH4(+) or NH3 ammonia species predominantly mediating an electrogenic NH4(+) transport. May act as a CO2 channel providing for renal acid secretion. The protein is Ammonium transporter Rh type B (RHBG) of Gorilla gorilla gorilla (Western lowland gorilla).